A 351-amino-acid polypeptide reads, in one-letter code: Circumsporozoite protein (351 aa).

The N-terminal stretch at 1–22 (MKNFILLAVSSILLVDLLPTHF) is a signal peptide. The segment at 50 to 266 (AQVRQSASRG…GQNNQGANVP (217 aa)) is disordered. A compositionally biased stretch (basic and acidic residues) spans 61-96 (GLGEKPKEGADKEKKKEKEKEKEEEPKKPNENKLKQ). The interval 80–88 (KEKEEEPKK) is required for the binding to heparan sulfate proteoglycans (HSPGs) on the surface of host hepatocytes. Positions 93–97 (KLKQP) are region I; contains the proteolytic cleavage site. Residues 97–219 (PEQPAAGAGG…AGARGEQPAA (123 aa)) show a composition bias toward low complexity. Repeat copies occupy residues 101–109 (AAGAGGEQP), 110–118 (AAGAGGEQP), 119–127 (AAGAGGEQP), 128–136 (AAGARGEQP), 137–145 (AAGAGGEQP), 146–154 (AAGAGGEQP), 155–163 (AAGAGGEQP), 164–172 (AAGAGGEQP), 173–181 (AAGAGGEQP), 182–190 (AAGARGEQP), 191–199 (AAGAGGEQP), 200–208 (AAGAGGEQP), 209–217 (AAGARGEQP), and 218–226 (AAGAGGEQP). Residues 101–226 (AAGAGGEQPA…PAAGAGGEQP (126 aa)) form a 14 X 9 AA tandem repeats of A-A-G-A-[GR]-G-E-Q-P region. A compositionally biased stretch (gly residues) spans 244–256 (GARGGNAGAGKGQ). Residues 277 to 329 (KIRSSVTTEWTPCSVTCGNGVRIRRKGHAGNKKAEDLTMDDLEVEACVMDKCA) form the TSP type-1 domain. Intrachain disulfides connect Cys-289-Cys-323 and Cys-293-Cys-328. Thr-292 carries an O-linked (Fuc) threonine glycan. Cys-328 is lipidated: GPI-anchor amidated cysteine. Residues 329–351 (AGIFNVVSNSLGLVILLVLALFN) constitute a propeptide, removed in mature form.

It belongs to the plasmodium circumsporozoite protein family. During host cell invasion, proteolytically cleaved at the cell membrane in the region I by a papain-like cysteine protease of parasite origin. Cleavage is triggered by the sporozoite contact with highly sulfated heparan sulfate proteoglycans (HSPGs) present on the host hepatocyte cell surface. Cleavage exposes the TSP type-1 (TSR) domain and is required for productive invasion of host hepatocytes but not for adhesion to the host cell membrane. Cleavage is dispensable for sporozoite development in the oocyst, motility and for traversal of host and vector cells. In terms of processing, O-glycosylated; maybe by POFUT2.

The protein localises to the cell membrane. It is found in the cytoplasm. In terms of biological role, essential sporozoite protein. In the mosquito vector, required for sporozoite development in the oocyst, migration through the vector hemolymph and entry into the vector salivary glands. In the vertebrate host, required for sporozoite migration through the host dermis and infection of host hepatocytes. Binds to highly sulfated heparan sulfate proteoglycans (HSPGs) on the surface of host hepatocytes. Functionally, in the vertebrate host, binds to highly sulfated heparan sulfate proteoglycans (HSPGs) on the surface of host hepatocytes and is required for sporozoite invasion of the host hepatocytes. The sequence is that of Circumsporozoite protein from Plasmodium knowlesi (strain nuri).